Reading from the N-terminus, the 298-residue chain is Glycine--tRNA ligase alpha subunit (298 aa).

This sequence belongs to the class-II aminoacyl-tRNA synthetase family. Tetramer of two alpha and two beta subunits.

It is found in the cytoplasm. The enzyme catalyses tRNA(Gly) + glycine + ATP = glycyl-tRNA(Gly) + AMP + diphosphate. This Helicobacter pylori (strain J99 / ATCC 700824) (Campylobacter pylori J99) protein is Glycine--tRNA ligase alpha subunit (glyQ).